Here is a 134-residue protein sequence, read N- to C-terminus: Large-conductance mechanosensitive channel (134 aa).

The next 2 helical transmembrane spans lie at 16–36 and 76–96; these read VVDM…VSSF and GVFL…FIAV.

This sequence belongs to the MscL family. Homopentamer.

Its subcellular location is the cell inner membrane. Channel that opens in response to stretch forces in the membrane lipid bilayer. May participate in the regulation of osmotic pressure changes within the cell. In Thioalkalivibrio sulfidiphilus (strain HL-EbGR7), this protein is Large-conductance mechanosensitive channel.